Reading from the N-terminus, the 212-residue chain is ATP synthase F(0) complex subunit a (212 aa).

The next 6 helical transmembrane spans lie at methionine 3–serine 23, tryptophan 58–leucine 78, glutamine 87–leucine 107, isoleucine 128–valine 148, leucine 154–threonine 174, and alanine 179–isoleucine 199.

It belongs to the ATPase A chain family. Component of the ATP synthase complex composed at least of ATP5F1A/subunit alpha, ATP5F1B/subunit beta, ATP5MC1/subunit c (homooctomer), MT-ATP6/subunit a, MT-ATP8/subunit 8, ATP5ME/subunit e, ATP5MF/subunit f, ATP5MG/subunit g, ATP5MK/subunit k, ATP5MJ/subunit j, ATP5F1C/subunit gamma, ATP5F1D/subunit delta, ATP5F1E/subunit epsilon, ATP5PF/subunit F6, ATP5PB/subunit b, ATP5PD/subunit d, ATP5PO/subunit OSCP. ATP synthase complex consists of a soluble F(1) head domain (subunits alpha(3) and beta(3)) - the catalytic core - and a membrane F(0) domain - the membrane proton channel (subunits c, a, 8, e, f, g, k and j). These two domains are linked by a central stalk (subunits gamma, delta, and epsilon) rotating inside the F1 region and a stationary peripheral stalk (subunits F6, b, d, and OSCP). Interacts with DNAJC30; interaction is direct.

The protein resides in the mitochondrion inner membrane. The enzyme catalyses H(+)(in) = H(+)(out). Its function is as follows. Subunit a, of the mitochondrial membrane ATP synthase complex (F(1)F(0) ATP synthase or Complex V) that produces ATP from ADP in the presence of a proton gradient across the membrane which is generated by electron transport complexes of the respiratory chain. ATP synthase complex consist of a soluble F(1) head domain - the catalytic core - and a membrane F(1) domain - the membrane proton channel. These two domains are linked by a central stalk rotating inside the F(1) region and a stationary peripheral stalk. During catalysis, ATP synthesis in the catalytic domain of F(1) is coupled via a rotary mechanism of the central stalk subunits to proton translocation. With the subunit c (ATP5MC1), forms the proton-conducting channel in the F(0) domain, that contains two crucial half-channels (inlet and outlet) that facilitate proton movement from the mitochondrial intermembrane space (IMS) into the matrix. Protons are taken up via the inlet half-channel and released through the outlet half-channel, following a Grotthuss mechanism. This Tropidurus montanus (Lizard) protein is ATP synthase F(0) complex subunit a.